A 72-amino-acid polypeptide reads, in one-letter code: ATP synthase subunit c (72 aa).

2 consecutive transmembrane segments (helical) span residues 1–21 and 49–69; these read MSLG…GAGI and FIGV…AFIV.

This sequence belongs to the ATPase C chain family. In terms of assembly, F-type ATPases have 2 components, F(1) - the catalytic core - and F(0) - the membrane proton channel. F(1) has five subunits: alpha(3), beta(3), gamma(1), delta(1), epsilon(1). F(0) has three main subunits: a(1), b(2) and c(10-14). The alpha and beta chains form an alternating ring which encloses part of the gamma chain. F(1) is attached to F(0) by a central stalk formed by the gamma and epsilon chains, while a peripheral stalk is formed by the delta and b chains.

It is found in the cell membrane. Its function is as follows. F(1)F(0) ATP synthase produces ATP from ADP in the presence of a proton or sodium gradient. F-type ATPases consist of two structural domains, F(1) containing the extramembraneous catalytic core and F(0) containing the membrane proton channel, linked together by a central stalk and a peripheral stalk. During catalysis, ATP synthesis in the catalytic domain of F(1) is coupled via a rotary mechanism of the central stalk subunits to proton translocation. Functionally, key component of the F(0) channel; it plays a direct role in translocation across the membrane. A homomeric c-ring of between 10-14 subunits forms the central stalk rotor element with the F(1) delta and epsilon subunits. The polypeptide is ATP synthase subunit c (Bacillus anthracis (strain A0248)).